Reading from the N-terminus, the 204-residue chain is Thymidine kinase (204 aa).

ATP-binding positions include 23–30 and 95–98; these read GSMFSGKT and DEAQ. Catalysis depends on Glu-96, which acts as the Proton acceptor. Residues Cys-152, Cys-155, Cys-184, and Cys-187 each contribute to the Zn(2+) site.

Belongs to the thymidine kinase family. Homotetramer.

It localises to the cytoplasm. It catalyses the reaction thymidine + ATP = dTMP + ADP + H(+). This is Thymidine kinase from Porphyromonas gingivalis (strain ATCC 33277 / DSM 20709 / CIP 103683 / JCM 12257 / NCTC 11834 / 2561).